A 347-amino-acid polypeptide reads, in one-letter code: Phenylalanine--tRNA ligase alpha subunit (347 aa).

Glu265 lines the Mg(2+) pocket.

The protein belongs to the class-II aminoacyl-tRNA synthetase family. Phe-tRNA synthetase alpha subunit type 1 subfamily. As to quaternary structure, tetramer of two alpha and two beta subunits. It depends on Mg(2+) as a cofactor.

Its subcellular location is the cytoplasm. It catalyses the reaction tRNA(Phe) + L-phenylalanine + ATP = L-phenylalanyl-tRNA(Phe) + AMP + diphosphate + H(+). The sequence is that of Phenylalanine--tRNA ligase alpha subunit from Wolbachia sp. subsp. Brugia malayi (strain TRS).